The primary structure comprises 227 residues: Translation initiation factor 6 (227 aa).

This sequence belongs to the eIF-6 family.

Functionally, binds to the 50S ribosomal subunit and prevents its association with the 30S ribosomal subunit to form the 70S initiation complex. The chain is Translation initiation factor 6 from Pyrococcus horikoshii (strain ATCC 700860 / DSM 12428 / JCM 9974 / NBRC 100139 / OT-3).